Here is a 330-residue protein sequence, read N- to C-terminus: Zinc finger protein Gfi-1b (330 aa).

Residues 1–20 (MPRSFLVKSKKAHTYHQPRV) form an SNAG domain region. Positions 1 to 42 (MPRSFLVKSKKAHTYHQPRVQEDEPLWPPALTPVPRDQAPSN) are disordered. Lys8 is modified (N6,N6-dimethyllysine). The interaction with ARIH2 stretch occupies residues 91–330 (GDSPLSDSPP…RHRESQHNLK (240 aa)). 6 C2H2-type zinc fingers span residues 163–186 (YHCV…RRSH), 192–214 (FACD…THVH), 220–242 (FECR…LLIH), 248–270 (YPCQ…TYIH), 276–298 (HKCQ…SRKH), and 304–327 (FSCE…ESQH). The segment at 164-330 (HCVKCNKVFS…RHRESQHNLK (167 aa)) is mediates interaction with GATA1.

As to quaternary structure, component of a RCOR-GFI-KDM1A-HDAC complex. Interacts directly with RCOR1, KDM1A and HDAC2. Forms a complex with GATA1. Interacts with histone methyltransferases EHMT2 and SUV39H1. Interacts with ARIH2 (via RING-type 2). Interacts with RUNX1T1. In terms of processing, methylation at Lys-8 in the SNAG domain seems required for the recruitment of the corepressor complex. In terms of tissue distribution, expressed in bone marrow and fetal liver, but also detectable in fetal spleen, fetal thymus, and testes. Detected in hematopoietic stem cells, erythroblasts, and megakaryocytes. Overexpressed in bone marrow of patients with erythroleukemia and megakaryocytic leukemia as well as in their corresponding leukemic cell lines, and markedly repressed in severe aplastic anemia (SAA).

Its subcellular location is the nucleus. In terms of biological role, essential proto-oncogenic transcriptional regulator necessary for development and differentiation of erythroid and megakaryocytic lineages. Component of a RCOR-GFI-KDM1A-HDAC complex that suppresses, via histone deacetylase (HDAC) recruitment, a number of genes implicated in multilineage blood cell development and controls hematopoietic differentiation. Transcriptional repressor or activator depending on both promoter and cell type context; represses promoter activity of SOCS1 and SOCS3 and thus, may regulate cytokine signaling pathways. Cooperates with GATA1 to repress target gene transcription, such as the apoptosis regulator BCL2L1; GFI1B silencing in leukemic cell lines markedly increase apoptosis rate. Inhibits down-regulation of MYC and MYB as well as the cyclin-dependent kinase inhibitor CDKN1A/P21WAF1 in IL6-treated myelomonocytic cells. Represses expression of GATA3 in T-cell lymphomas and inhibits GATA1-mediated transcription; as GATA1 also mediates erythroid GFI1B transcription, both GATA1 and GFI1B participate in a feedback regulatory pathway controlling the expression of GFI1B gene in erythroid cells. Suppresses GATA1-mediated stimulation of GFI1B promoter through protein interaction. Binds to gamma-satellite DNA and to its own promoter, auto-repressing its own expression. Alters histone methylation by recruiting histone methyltransferase to target genes promoters. Plays a role in heterochromatin formation. This Homo sapiens (Human) protein is Zinc finger protein Gfi-1b (GFI1B).